Reading from the N-terminus, the 238-residue chain is Purine nucleoside phosphorylase DeoD-type (238 aa).

A purine D-ribonucleoside is bound at residue histidine 4. Phosphate-binding positions include glycine 20, arginine 24, arginine 43, and 87-90; that span reads RIGS. Residues 181 to 183 and 205 to 206 each bind a purine D-ribonucleoside; these read EME and SD. Aspartate 206 functions as the Proton donor in the catalytic mechanism.

This sequence belongs to the PNP/UDP phosphorylase family. In terms of assembly, homohexamer; trimer of homodimers.

It catalyses the reaction a purine D-ribonucleoside + phosphate = a purine nucleobase + alpha-D-ribose 1-phosphate. The enzyme catalyses a purine 2'-deoxy-D-ribonucleoside + phosphate = a purine nucleobase + 2-deoxy-alpha-D-ribose 1-phosphate. Functionally, catalyzes the reversible phosphorolytic breakdown of the N-glycosidic bond in the beta-(deoxy)ribonucleoside molecules, with the formation of the corresponding free purine bases and pentose-1-phosphate. The sequence is that of Purine nucleoside phosphorylase DeoD-type from Mycoplasma pneumoniae (strain ATCC 29342 / M129 / Subtype 1) (Mycoplasmoides pneumoniae).